A 169-amino-acid chain; its full sequence is uncharacterized protein (169 aa).

This is an uncharacterized protein from Buchnera aphidicola subsp. Acyrthosiphon pisum (strain APS) (Acyrthosiphon pisum symbiotic bacterium).